The following is a 177-amino-acid chain: Large ribosomal subunit protein uL16 (177 aa).

It belongs to the universal ribosomal protein uL16 family. As to quaternary structure, part of the 50S ribosomal subunit. Weakly binds 5S rRNA. Probably binds the A and P site tRNAs.

In terms of biological role, this is 1 of 5 proteins that mediate the attachment of the 5S rRNA onto the large ribosomal subunit, stabilizing the orientation of adjacent RNA domains. Modeling places the A and P site tRNAs in close proximity to this protein. The protein is Large ribosomal subunit protein uL16 of Haloarcula marismortui (strain ATCC 43049 / DSM 3752 / JCM 8966 / VKM B-1809) (Halobacterium marismortui).